A 286-amino-acid chain; its full sequence is Pantothenate synthetase (286 aa).

Met30–His37 serves as a coordination point for ATP. His37 serves as the catalytic Proton donor. A (R)-pantoate-binding site is contributed by Gln61. Gln61 provides a ligand contact to beta-alanine. Residue Gly149–Asp152 coordinates ATP. (R)-pantoate is bound at residue Gln155. Residues Val178 and Met186–Arg189 each bind ATP.

It belongs to the pantothenate synthetase family. In terms of assembly, homodimer.

The protein resides in the cytoplasm. It carries out the reaction (R)-pantoate + beta-alanine + ATP = (R)-pantothenate + AMP + diphosphate + H(+). It functions in the pathway cofactor biosynthesis; (R)-pantothenate biosynthesis; (R)-pantothenate from (R)-pantoate and beta-alanine: step 1/1. Functionally, catalyzes the condensation of pantoate with beta-alanine in an ATP-dependent reaction via a pantoyl-adenylate intermediate. This Thioalkalivibrio sulfidiphilus (strain HL-EbGR7) protein is Pantothenate synthetase.